A 515-amino-acid chain; its full sequence is Na(+)/H(+) antiporter NhaB (515 aa).

Transmembrane regions (helical) follow at residues 23-43 (IIVF…FIAG), 44-64 (WCLV…YPLQ), 88-108 (IMAS…IYFM), 119-139 (LLIT…SAAF), 143-163 (FLDA…FYGV), 202-222 (LMMH…VGEP), 238-258 (FFIR…ITCV), 303-323 (GIIG…VGLI), 324-344 (GLSV…STIG), 357-377 (LVVF…GPII), 389-409 (LLLF…VFVA), 447-467 (ATPN…APLI), and 477-497 (MALP…EYIL).

The protein belongs to the NhaB Na(+)/H(+) (TC 2.A.34) antiporter family.

The protein localises to the cell inner membrane. The catalysed reaction is 2 Na(+)(in) + 3 H(+)(out) = 2 Na(+)(out) + 3 H(+)(in). Na(+)/H(+) antiporter that extrudes sodium in exchange for external protons. The sequence is that of Na(+)/H(+) antiporter NhaB from Mannheimia succiniciproducens (strain KCTC 0769BP / MBEL55E).